We begin with the raw amino-acid sequence, 161 residues long: uncharacterized protein (161 aa).

The protein to M.thermoautotrophicum MTH862.

This is an uncharacterized protein from Methanocaldococcus jannaschii (strain ATCC 43067 / DSM 2661 / JAL-1 / JCM 10045 / NBRC 100440) (Methanococcus jannaschii).